The primary structure comprises 102 residues: 10 kDa heat shock protein, mitochondrial (102 aa).

Ala2 is modified (N-acetylalanine). Residue Lys8 is modified to N6-acetyllysine. N6-succinyllysine is present on Lys28. The residue at position 40 (Lys40) is an N6-acetyllysine; alternate. Lys40, Lys54, and Lys56 each carry N6-malonyllysine; alternate. N6-succinyllysine; alternate occurs at positions 40, 54, and 56. Lys56 is modified (N6-acetyllysine; alternate). Ser57 carries the phosphoserine modification. An N6-acetyllysine; alternate mark is found at Lys66 and Lys70. N6-succinyllysine; alternate is present on residues Lys66 and Lys70. Thr79 carries the phosphothreonine modification. N6-acetyllysine; alternate is present on residues Lys80 and Lys86. N6-succinyllysine; alternate is present on residues Lys80 and Lys86. Lys99 carries the N6-acetyllysine modification.

Belongs to the GroES chaperonin family. In terms of assembly, homoheptamer arranged in a ring structure. 2 heptameric Hsp10 rings interact with a Hsp60 tetradecamer in the structure of a back-to-back double heptameric ring to form the symmetrical football complex.

The protein localises to the mitochondrion matrix. In terms of biological role, co-chaperonin implicated in mitochondrial protein import and macromolecular assembly. Together with Hsp60, facilitates the correct folding of imported proteins. May also prevent misfolding and promote the refolding and proper assembly of unfolded polypeptides generated under stress conditions in the mitochondrial matrix. The functional units of these chaperonins consist of heptameric rings of the large subunit Hsp60, which function as a back-to-back double ring. In a cyclic reaction, Hsp60 ring complexes bind one unfolded substrate protein per ring, followed by the binding of ATP and association with 2 heptameric rings of the co-chaperonin Hsp10. This leads to sequestration of the substrate protein in the inner cavity of Hsp60 where, for a certain period of time, it can fold undisturbed by other cell components. Synchronous hydrolysis of ATP in all Hsp60 subunits results in the dissociation of the chaperonin rings and the release of ADP and the folded substrate protein. The sequence is that of 10 kDa heat shock protein, mitochondrial (Hspe1) from Mus musculus (Mouse).